The following is a 265-amino-acid chain: DNA repair protein RecO (265 aa).

This sequence belongs to the RecO family.

Its function is as follows. Involved in DNA repair and RecF pathway recombination. In Mycolicibacterium paratuberculosis (strain ATCC BAA-968 / K-10) (Mycobacterium paratuberculosis), this protein is DNA repair protein RecO.